The following is a 450-amino-acid chain: tRNA modification GTPase MnmE (450 aa).

Positions 23, 79, and 118 each coordinate (6S)-5-formyl-5,6,7,8-tetrahydrofolate. Residues 214 to 374 enclose the TrmE-type G domain; it reads GITLILVGKP…LKEHILNKVG (161 aa). N224 contributes to the K(+) binding site. GTP-binding positions include 224–229, 243–249, and 268–271; these read NAGKSS, TSIAGTT, and DTAG. S228 contributes to the Mg(2+) binding site. K(+)-binding residues include T243, I245, and T248. T249 is a Mg(2+) binding site. K450 contacts (6S)-5-formyl-5,6,7,8-tetrahydrofolate.

Belongs to the TRAFAC class TrmE-Era-EngA-EngB-Septin-like GTPase superfamily. TrmE GTPase family. Homodimer. Heterotetramer of two MnmE and two MnmG subunits. The cofactor is K(+).

The protein localises to the cytoplasm. Exhibits a very high intrinsic GTPase hydrolysis rate. Involved in the addition of a carboxymethylaminomethyl (cmnm) group at the wobble position (U34) of certain tRNAs, forming tRNA-cmnm(5)s(2)U34. The sequence is that of tRNA modification GTPase MnmE from Francisella tularensis subsp. holarctica (strain FTNF002-00 / FTA).